A 59-amino-acid polypeptide reads, in one-letter code: uncharacterized protein (59 aa).

A helical membrane pass occupies residues Phe7–Ala24.

It is found in the membrane. This is an uncharacterized protein from Rickettsia prowazekii (strain Madrid E).